The following is a 127-amino-acid chain: Aspartate 1-decarboxylase (127 aa).

S25 functions as the Schiff-base intermediate with substrate; via pyruvic acid in the catalytic mechanism. A Pyruvic acid (Ser) modification is found at S25. T57 lines the substrate pocket. The Proton donor role is filled by Y58. A substrate-binding site is contributed by 73 to 75; sequence GAA.

This sequence belongs to the PanD family. Heterooctamer of four alpha and four beta subunits. Requires pyruvate as cofactor. Is synthesized initially as an inactive proenzyme, which is activated by self-cleavage at a specific serine bond to produce a beta-subunit with a hydroxyl group at its C-terminus and an alpha-subunit with a pyruvoyl group at its N-terminus.

It is found in the cytoplasm. It carries out the reaction L-aspartate + H(+) = beta-alanine + CO2. The protein operates within cofactor biosynthesis; (R)-pantothenate biosynthesis; beta-alanine from L-aspartate: step 1/1. Its function is as follows. Catalyzes the pyruvoyl-dependent decarboxylation of aspartate to produce beta-alanine. This is Aspartate 1-decarboxylase from Bacillus cereus (strain ATCC 10987 / NRS 248).